A 194-amino-acid chain; its full sequence is NADH-quinone oxidoreductase subunit B (194 aa).

The span at M1–V11 shows a compositional bias: polar residues. A disordered region spans residues M1–A22. [4Fe-4S] cluster is bound by residues C72, C73, C138, and C168.

The protein belongs to the complex I 20 kDa subunit family. In terms of assembly, NDH-1 is composed of 14 different subunits. Subunits NuoB, C, D, E, F, and G constitute the peripheral sector of the complex. [4Fe-4S] cluster serves as cofactor.

Its subcellular location is the cell inner membrane. The enzyme catalyses a quinone + NADH + 5 H(+)(in) = a quinol + NAD(+) + 4 H(+)(out). In terms of biological role, NDH-1 shuttles electrons from NADH, via FMN and iron-sulfur (Fe-S) centers, to quinones in the respiratory chain. The immediate electron acceptor for the enzyme in this species is believed to be ubiquinone. Couples the redox reaction to proton translocation (for every two electrons transferred, four hydrogen ions are translocated across the cytoplasmic membrane), and thus conserves the redox energy in a proton gradient. In Agrobacterium fabrum (strain C58 / ATCC 33970) (Agrobacterium tumefaciens (strain C58)), this protein is NADH-quinone oxidoreductase subunit B.